The chain runs to 357 residues: Phospho-N-acetylmuramoyl-pentapeptide-transferase (357 aa).

Transmembrane regions (helical) follow at residues 23–43 (AIFS…YFIY), 70–90 (TMGG…YCNL), 91–111 (SNIY…IGFI), 127–147 (LKWK…MIKI), 171–191 (YLYV…VNLT), 196–216 (GLAI…SLFS), 236–256 (LAIL…FNSY), 260–280 (VFMG…IAIL), 286–306 (LLII…LQII), and 334–354 (LIIV…LISL).

This sequence belongs to the glycosyltransferase 4 family. MraY subfamily. Mg(2+) is required as a cofactor.

The protein resides in the cell inner membrane. It catalyses the reaction UDP-N-acetyl-alpha-D-muramoyl-L-alanyl-gamma-D-glutamyl-meso-2,6-diaminopimeloyl-D-alanyl-D-alanine + di-trans,octa-cis-undecaprenyl phosphate = di-trans,octa-cis-undecaprenyl diphospho-N-acetyl-alpha-D-muramoyl-L-alanyl-D-glutamyl-meso-2,6-diaminopimeloyl-D-alanyl-D-alanine + UMP. It participates in cell wall biogenesis; peptidoglycan biosynthesis. Catalyzes the initial step of the lipid cycle reactions in the biosynthesis of the cell wall peptidoglycan: transfers peptidoglycan precursor phospho-MurNAc-pentapeptide from UDP-MurNAc-pentapeptide onto the lipid carrier undecaprenyl phosphate, yielding undecaprenyl-pyrophosphoryl-MurNAc-pentapeptide, known as lipid I. The chain is Phospho-N-acetylmuramoyl-pentapeptide-transferase from Buchnera aphidicola subsp. Acyrthosiphon pisum (strain Tuc7).